Reading from the N-terminus, the 138-residue chain is Large ribosomal subunit protein uL16 (138 aa).

It belongs to the universal ribosomal protein uL16 family. In terms of assembly, part of the 50S ribosomal subunit.

Binds 23S rRNA and is also seen to make contacts with the A and possibly P site tRNAs. The chain is Large ribosomal subunit protein uL16 from Acidiphilium cryptum (strain JF-5).